A 365-amino-acid polypeptide reads, in one-letter code: NADH-quinone oxidoreductase subunit D (365 aa).

This sequence belongs to the complex I 49 kDa subunit family. NDH-1 is composed of 14 different subunits. Subunits NuoB, C, D, E, F, and G constitute the peripheral sector of the complex.

It localises to the cell membrane. It carries out the reaction a quinone + NADH + 5 H(+)(in) = a quinol + NAD(+) + 4 H(+)(out). In terms of biological role, NDH-1 shuttles electrons from NADH, via FMN and iron-sulfur (Fe-S) centers, to quinones in the respiratory chain. The immediate electron acceptor for the enzyme in this species is believed to be a menaquinone. Couples the redox reaction to proton translocation (for every two electrons transferred, four hydrogen ions are translocated across the cytoplasmic membrane), and thus conserves the redox energy in a proton gradient. This is NADH-quinone oxidoreductase subunit D from Carboxydothermus hydrogenoformans (strain ATCC BAA-161 / DSM 6008 / Z-2901).